Consider the following 424-residue polypeptide: Adenylosuccinate synthetase (424 aa).

GTP-binding positions include 12-18 (GDEGKGK) and 40-42 (GHT). D13 functions as the Proton acceptor in the catalytic mechanism. 2 residues coordinate Mg(2+): D13 and G40. Residues 13–16 (DEGK), 38–41 (NAGH), T130, R144, N220, T235, and R299 each bind IMP. H41 serves as the catalytic Proton donor. 295–301 (VTTGRRR) is a binding site for substrate. GTP-binding positions include R301, 327 to 329 (KLD), and 412 to 414 (GTG).

This sequence belongs to the adenylosuccinate synthetase family. Homodimer. Requires Mg(2+) as cofactor.

Its subcellular location is the cytoplasm. It carries out the reaction IMP + L-aspartate + GTP = N(6)-(1,2-dicarboxyethyl)-AMP + GDP + phosphate + 2 H(+). It functions in the pathway purine metabolism; AMP biosynthesis via de novo pathway; AMP from IMP: step 1/2. In terms of biological role, plays an important role in the de novo pathway and in the salvage pathway of purine nucleotide biosynthesis. Catalyzes the first committed step in the biosynthesis of AMP from IMP. This is Adenylosuccinate synthetase from Aspergillus flavus (strain ATCC 200026 / FGSC A1120 / IAM 13836 / NRRL 3357 / JCM 12722 / SRRC 167).